Consider the following 149-residue polypeptide: Pleckstrin homology domain-containing family J member 1 (149 aa).

Positions 15–108 (PAEMAAELGM…WMEALRRASY (94 aa)) constitute a PH domain.

In terms of tissue distribution, expressed in testis and liver.

The protein is Pleckstrin homology domain-containing family J member 1 (PLEKHJ1) of Homo sapiens (Human).